Reading from the N-terminus, the 465-residue chain is Argininosuccinate lyase (465 aa).

The protein belongs to the lyase 1 family. Argininosuccinate lyase subfamily.

The protein resides in the cytoplasm. The enzyme catalyses 2-(N(omega)-L-arginino)succinate = fumarate + L-arginine. Its pathway is amino-acid biosynthesis; L-arginine biosynthesis; L-arginine from L-ornithine and carbamoyl phosphate: step 3/3. This Hyphomonas neptunium (strain ATCC 15444) protein is Argininosuccinate lyase.